The chain runs to 350 residues: Delta(6)-protoilludene synthase STEHIDRAFT_64702 (350 aa).

4 residues coordinate Mg(2+): Asp-89, Asn-225, Ser-229, and Glu-233. Residues Asp-89 to Asp-93 carry the D(D/E)XX(D/E) motif motif. The short motif at Asn-225–Glu-233 is the NSE motif element. Arg-314 and Tyr-315 together coordinate (2E,6E)-farnesyl diphosphate.

This sequence belongs to the terpene synthase family. Mg(2+) serves as cofactor. It depends on Mn(2+) as a cofactor. Ca(2+) is required as a cofactor. Requires Ni(2+) as cofactor. The cofactor is Co(2+).

The enzyme catalyses (2E,6E)-farnesyl diphosphate = Delta(6)-protoilludene + diphosphate. The catalysed reaction is (2E,6E)-farnesyl diphosphate = alpha-selinene + diphosphate. Its activity is regulated as follows. Ca(2+) switches the cyclization mechanism of delta(6)-protoilludene synthase from 1,11 to 1,10 cyclization which leads to the production of beta-elemene. Terpene cyclase that catalyzes the cyclization of farnesyl diphosphate (FPP) to delta(6)-protoilludene. In presence of Ca(2+), a significant switch from 1,11 to a dual 1,11/1,10 cyclization occurs, producing beta-elemene as the major product, with lower levels of delta(6)-protoilludene and (E)-beta-caryophyllene, and traces of beta-selinene and alpha-selinene. This chain is Delta(6)-protoilludene synthase STEHIDRAFT_64702, found in Stereum hirsutum (strain FP-91666) (White-rot fungus).